We begin with the raw amino-acid sequence, 384 residues long: F-box/kelch-repeat protein At3g44120 (384 aa).

In terms of domain architecture, F-box spans 1–46 (MTLPELPKDLVEEILCFVPATSLKRLRSSCKEWNRLFKDDKRFARK). Kelch repeat units lie at residues 156–202 (CNKS…RECF), 264–314 (SVLV…FLLD), and 352–384 (GVQTIGGYSPIIVNYVPSLGQIELAGSKRKRDY).

This chain is F-box/kelch-repeat protein At3g44120, found in Arabidopsis thaliana (Mouse-ear cress).